A 192-amino-acid polypeptide reads, in one-letter code: 7-methyl-GTP pyrophosphatase (192 aa).

D69 functions as the Proton acceptor in the catalytic mechanism.

It belongs to the Maf family. YceF subfamily. The cofactor is a divalent metal cation.

It is found in the cytoplasm. The catalysed reaction is N(7)-methyl-GTP + H2O = N(7)-methyl-GMP + diphosphate + H(+). Its function is as follows. Nucleoside triphosphate pyrophosphatase that hydrolyzes 7-methyl-GTP (m(7)GTP). May have a dual role in cell division arrest and in preventing the incorporation of modified nucleotides into cellular nucleic acids. The sequence is that of 7-methyl-GTP pyrophosphatase from Pseudomonas fluorescens (strain ATCC BAA-477 / NRRL B-23932 / Pf-5).